Reading from the N-terminus, the 728-residue chain is Hepatocyte growth factor (728 aa).

Positions 1 to 32 are cleaved as a signal peptide; it reads MMWGTKLLPVLLLQHVLLHLLLLPVTIPYAEG. Position 33 is a pyrrolidone carboxylic acid (Gln33). Residues 38–124 enclose the PAN domain; the sequence is NTLHEFKKSA…HEFDLYENKD (87 aa). 8 disulfide bridges follow: Cys71–Cys97, Cys75–Cys85, Cys129–Cys207, Cys150–Cys190, Cys178–Cys202, Cys212–Cys289, Cys233–Cys272, and Cys261–Cys284. Kringle domains follow at residues 129–207 and 212–289; these read CIIG…IPQC and CMTC…IKMC. N-linked (GlcNAc...) asparagine glycosylation occurs at Asn295. Cystine bridges form between Cys306–Cys384, Cys327–Cys366, Cys355–Cys378, Cys392–Cys470, Cys413–Cys453, Cys441–Cys465, Cys488–Cys607, Cys520–Cys536, Cys615–Cys682, Cys645–Cys661, and Cys672–Cys700. 2 Kringle domains span residues 306-384 and 392-470; these read CIKG…IPKC and CYRG…ISRC. Asn403 is a glycosylation site (N-linked (GlcNAc...) asparagine). In terms of domain architecture, Peptidase S1 spans 496 to 724; sequence VVNGIPTQTT…YAKWIHKVIL (229 aa). N-linked (GlcNAc...) asparagine glycans are attached at residues Asn569 and Asn656.

It belongs to the peptidase S1 family. Plasminogen subfamily. In terms of assembly, dimer of an alpha chain and a beta chain linked by a disulfide bond. Interacts with SRPX2; the interaction increases HGF mitogenic activity. The single-chain precursor undergoes proteolytic processing by TMPRSS13 resulting in an active two-chain form. The single-chain precursor undergoes proteolytic processing by HGFAC resulting in an active two-chain form.

In terms of biological role, potent mitogen for mature parenchymal hepatocyte cells, seems to be a hepatotrophic factor, and acts as a growth factor for a broad spectrum of tissues and cell types. Activating ligand for the receptor tyrosine kinase MET by binding to it and promoting its dimerization. Activates MAPK signaling following TMPRSS13 cleavage and activation. In Rattus norvegicus (Rat), this protein is Hepatocyte growth factor (Hgf).